The sequence spans 259 residues: Ribosomal RNA large subunit methyltransferase E (259 aa).

S-adenosyl-L-methionine-binding residues include glycine 49, tryptophan 51, aspartate 69, aspartate 88, and aspartate 112. Lysine 152 acts as the Proton acceptor in catalysis. One can recognise a TRAM domain in the interval 199–257 (PIAEGDEHTVEIVDTGDEGDGIARIEGYTLFVDDAAEGDTVDVTVTDLKPNYGFAERRD).

It belongs to the class I-like SAM-binding methyltransferase superfamily. RNA methyltransferase RlmE family.

Its subcellular location is the cytoplasm. The enzyme catalyses uridine(2552) in 23S rRNA + S-adenosyl-L-methionine = 2'-O-methyluridine(2552) in 23S rRNA + S-adenosyl-L-homocysteine + H(+). Its function is as follows. Specifically methylates the uridine in position 2552 of 23S rRNA at the 2'-O position of the ribose in the fully assembled 50S ribosomal subunit. This Halobacterium salinarum (strain ATCC 29341 / DSM 671 / R1) protein is Ribosomal RNA large subunit methyltransferase E.